The primary structure comprises 319 residues: ATP-dependent 6-phosphofructokinase (319 aa).

Glycine 11 contributes to the ATP binding site. Residue 21–25 (RAVTR) coordinates ADP. Residues 72–73 (RF) and 102–105 (GDGS) contribute to the ATP site. Aspartate 103 is a Mg(2+) binding site. 125-127 (SID) is a binding site for substrate. The active-site Proton acceptor is aspartate 127. Arginine 154 contributes to the ADP binding site. Residues arginine 162 and 169–171 (MGR) contribute to the substrate site. ADP is bound by residues 185 to 187 (GAD) and 213 to 215 (KKH). Substrate contacts are provided by residues glutamate 222, arginine 243, and 249–252 (HMQR).

This sequence belongs to the phosphofructokinase type A (PFKA) family. ATP-dependent PFK group I subfamily. Prokaryotic clade 'B1' sub-subfamily. Homotetramer. The cofactor is Mg(2+).

It is found in the cytoplasm. It catalyses the reaction beta-D-fructose 6-phosphate + ATP = beta-D-fructose 1,6-bisphosphate + ADP + H(+). Its pathway is carbohydrate degradation; glycolysis; D-glyceraldehyde 3-phosphate and glycerone phosphate from D-glucose: step 3/4. With respect to regulation, allosterically activated by ADP and other diphosphonucleosides, and allosterically inhibited by phosphoenolpyruvate. Functionally, catalyzes the phosphorylation of D-fructose 6-phosphate to fructose 1,6-bisphosphate by ATP, the first committing step of glycolysis. This Lactobacillus johnsonii (strain CNCM I-12250 / La1 / NCC 533) protein is ATP-dependent 6-phosphofructokinase.